The following is a 475-amino-acid chain: Peripherin (475 aa).

The segment at 1–42 is disordered; sequence MPSSASMSHHHSSGLRSSISSTSYRRTFGPPPSLSPGAFSYS. The head stretch occupies residues 1 to 103; it reads MPSSASMSHH…FLATRSNEKQ (103 aa). Positions 14–26 are enriched in low complexity; the sequence is GLRSSISSTSYRR. Y24 carries the 3'-nitrotyrosine modification. Residues S35 and S57 each carry the phosphoserine modification. S66 is subject to Phosphoserine; by PKB/AKT1. The IF rod domain maps to 101 to 411; the sequence is EKQELQELND…KLLEGEESRI (311 aa). The tract at residues 104 to 136 is coil 1A; the sequence is ELQELNDRFANFIEKVRFLEQQNAALRGELSQA. The linker 1 stretch occupies residues 137–147; that stretch reads RGQEPARADQL. The coil 1B stretch occupies residues 148–243; sequence CQQELRELRR…KLHEEELRDL (96 aa). The interval 244–266 is linker 2; that stretch reads QVSVESQQVQQVEVEATVKPELT. Residues 267-409 form a coil 2 region; that stretch reads AALRDIRAQY…YRKLLEGEES (143 aa). Y383 carries the 3'-nitrotyrosine modification. Residues 410–475 form a tail region; the sequence is RISVPVHSFA…DLDKSSIHSY (66 aa). The disordered stretch occupies residues 453–475; sequence EKVVTESQKEQHSDLDKSSIHSY. A Phosphotyrosine modification is found at Y475.

It belongs to the intermediate filament family. As to quaternary structure, forms homodimers (in vitro). Homopolymerizes into a filamentous network (in vitro). Forms heterodimers with NEFL, NEFM or NEFH (in vitro). Interacts with DST (via C-terminus). Interacts with RAB7A; the interaction is direct. Interacts with PRKCE (via phorbol-ester/DAG-type 2 domain). Phosphorylated; phosphorylation increases after nerve injury in regenerating neurons. In terms of tissue distribution, expressed in the sciatic nerve and at very low levels in the central nervous system (at protein level). Expressed in the spinal cord, in the sciatic nerve at the level of the dorsal root ganglion and in trigeminal nerves (at protein level). Expressed in the cranial nerves in the hindbrain, including the sensory and motor trigeminal neurons, the mesencephalic trigeminal neurons, the spinal trigeminal neurons, and in the facial nerve (at protein level). Expressed in the cerebellum, with expression in the inferior cerebellar peduncle and the lateral deep cerebellar nucleus (at protein level). Expressed in vestibulocochlear neurons, such as the anteroventral cochlear nucleus, the dorsal cochlear nucleus, the superficial granule cell layer and the granule cell lamina (at protein level). Expressed in glossopharyngeal, vagal and hypoglossal neurons (at protein level). Expressed in peripheral sensory neurons, in the dorsal root ganglia and the spinal cord, and to a lower extent in motor neurons. Expressed in the optic tract of the central nervous system, especially in the lateral geniculate nucleus and the superior colliculus. Expressed in neurons of the pineal stalk in the cortex. Expressed in the spinal trigeminal tract of the midbrain, in the medulla and in the medial cerebellar peduncle.

It is found in the cytoplasm. The protein resides in the cytoskeleton. Its subcellular location is the cell projection. It localises to the axon. The protein localises to the perikaryon. Class-III neuronal intermediate filament protein. May form an independent structural network without the involvement of other neurofilaments or may cooperate with the neuronal intermediate filament proteins NEFL, NEFH, NEFM and INA to form filamentous networks. Assembly of the neuronal intermediate filaments may be regulated by RAB7A. Plays a role in the development of unmyelinated sensory neurons. May be involved in axon elongation and axon regeneration after injury. Inhibits neurite extension in type II spiral ganglion neurons in the cochlea. This Mus musculus (Mouse) protein is Peripherin (Prph).